The chain runs to 262 residues: Adenosylcobinamide-GDP ribazoletransferase (262 aa).

6 consecutive transmembrane segments (helical) span residues 43–63 (YFGL…WLTQ), 66–86 (LPAG…TGGF), 120–140 (GALA…ELAL), 146–166 (AGSA…SIIF), 191–211 (LLIL…LAAL), and 242–262 (AAQQ…GNIL).

The protein belongs to the CobS family. Requires Mg(2+) as cofactor.

Its subcellular location is the cell inner membrane. It carries out the reaction alpha-ribazole + adenosylcob(III)inamide-GDP = adenosylcob(III)alamin + GMP + H(+). The catalysed reaction is alpha-ribazole 5'-phosphate + adenosylcob(III)inamide-GDP = adenosylcob(III)alamin 5'-phosphate + GMP + H(+). It participates in cofactor biosynthesis; adenosylcobalamin biosynthesis; adenosylcobalamin from cob(II)yrinate a,c-diamide: step 7/7. Functionally, joins adenosylcobinamide-GDP and alpha-ribazole to generate adenosylcobalamin (Ado-cobalamin). Also synthesizes adenosylcobalamin 5'-phosphate from adenosylcobinamide-GDP and alpha-ribazole 5'-phosphate. This chain is Adenosylcobinamide-GDP ribazoletransferase, found in Shewanella baltica (strain OS195).